The primary structure comprises 303 residues: Rhomboid-related protein 2 (303 aa).

Residues 20-39 (MKEELEEEEKMREDGGGKDR) form a disordered region. Basic and acidic residues predominate over residues 28–39 (EKMREDGGGKDR). Transmembrane regions (helical) follow at residues 72 to 92 (PVFI…YAVW), 128 to 148 (LVHA…VLGI), 159 to 179 (VGLV…IFDP), 183 to 203 (LVGA…NVLV), 212 to 232 (FGIF…GFAL), 245 to 265 (VSFA…YTVF), and 278 to 298 (FWIA…FNIF). Ser-187 functions as the Nucleophile in the catalytic mechanism. His-250 is an active-site residue.

Belongs to the peptidase S54 family. Post-translationally, proteolytic processing of the proenzyme produces a N-terminal fragment (NTF) and a C-terminal fragment (CTF). The processing is required for activation of the protease.

The protein resides in the cell membrane. It catalyses the reaction Cleaves type-1 transmembrane domains using a catalytic dyad composed of serine and histidine that are contributed by different transmembrane domains.. Its function is as follows. Involved in regulated intramembrane proteolysis and the subsequent release of functional polypeptides from their membrane anchors. Known substrate: EFNB3. The polypeptide is Rhomboid-related protein 2 (RHBDL2) (Homo sapiens (Human)).